Here is a 248-residue protein sequence, read N- to C-terminus: Tabserin (248 aa).

Positions M1–S19 are cleaved as a signal peptide. In terms of domain architecture, Peptidase S1 spans I24–R248. Residues C49 and C65 are joined by a disulfide bond. Catalysis depends on charge relay system residues H64 and D111. 2 disulfide bridges follow: C175–C189 and C201–C226. The active-site Charge relay system is the S205.

This sequence belongs to the peptidase S1 family. As to expression, expressed in salivary glands.

It is found in the secreted. In terms of biological role, serine protease that inhibits blood coagulation in a dose-dependent manner. May act by destroying coagulant factors to inhibit blood coagulation. The protein is Tabserin of Tabanus yao (Horsefly).